A 482-amino-acid chain; its full sequence is Docking protein 1 (482 aa).

Met1 bears the N-acetylmethionine mark. In terms of domain architecture, PH spans 4-119; that stretch reads AVMEGPLFLQ…WVQTLCRTAF (116 aa). A Phosphoserine modification is found at Ser48. Residues 151-259 enclose the IRS-type PTB domain; sequence EGSQFWVTSQ…QQQKAQGKVG (109 aa). 2 positions are modified to phosphoserine: Ser269 and Ser290. The segment at 269 to 328 is disordered; the sequence is SHDGETEGKTVPPPVPQDPLGSPPALYAEPLDSLRIPPGPSQDSVYSDPLGSTPAGAGEG. A phosphotyrosine mark is found at Tyr295, Tyr336, Tyr340, Tyr361, and Tyr376. A disordered region spans residues 353 to 373; that stretch reads TDSKEDPIYDEPEGLAPAPPR. Phosphotyrosine; by INSR is present on Tyr397. The interval 398-482 is disordered; sequence ELPYNPATDD…RAGVKSEGST (85 aa). A Phosphotyrosine modification is found at Tyr408. Positions 410 to 423 are enriched in pro residues; the sequence is VPPPRSPKPAPAPK. Residue Ser415 is modified to Phosphoserine. The segment covering 432-459 has biased composition (polar residues); it reads SGTTRGSGSKGFSSDTALYSQVQKSGTS. Phosphotyrosine is present on Tyr450.

Belongs to the DOK family. Type A subfamily. In terms of assembly, interacts with RasGAP, INPP5D/SHIP1 and ABL1. Interacts directly with phosphorylated ITGB3. Interacts with SRMS (via the SH2 and SH3 domains). Post-translationally, constitutively tyrosine-phosphorylated. Phosphorylated by TEC. Phosphorylated on tyrosine residues by the insulin receptor kinase. Results in the negative regulation of the insulin signaling pathway. Phosphorylated by LYN. Phosphorylated on tyrosine residues by SRMS. In terms of tissue distribution, expressed in lung, spleen, skeletal muscle and kidney.

It is found in the cytoplasm. Its subcellular location is the nucleus. Its function is as follows. DOK proteins are enzymatically inert adaptor or scaffolding proteins. They provide a docking platform for the assembly of multimolecular signaling complexes. DOK1 appears to be a negative regulator of the insulin signaling pathway. Modulates integrin activation by competing with talin for the same binding site on ITGB3. In Mus musculus (Mouse), this protein is Docking protein 1 (Dok1).